A 309-amino-acid polypeptide reads, in one-letter code: Homoserine O-succinyltransferase (309 aa).

The Acyl-thioester intermediate role is filled by Cys142. Positions 163 and 192 each coordinate substrate. His235 functions as the Proton acceptor in the catalytic mechanism. Glu237 is an active-site residue. Substrate is bound at residue Arg249.

This sequence belongs to the MetA family. In terms of assembly, homodimer.

It is found in the cytoplasm. The catalysed reaction is L-homoserine + succinyl-CoA = O-succinyl-L-homoserine + CoA. Its pathway is amino-acid biosynthesis; L-methionine biosynthesis via de novo pathway; O-succinyl-L-homoserine from L-homoserine: step 1/1. Its function is as follows. Transfers a succinyl group from succinyl-CoA to L-homoserine, forming succinyl-L-homoserine. The polypeptide is Homoserine O-succinyltransferase (Escherichia fergusonii (strain ATCC 35469 / DSM 13698 / CCUG 18766 / IAM 14443 / JCM 21226 / LMG 7866 / NBRC 102419 / NCTC 12128 / CDC 0568-73)).